A 316-amino-acid chain; its full sequence is Beta-ketoacyl-[acyl-carrier-protein] synthase III (316 aa).

Active-site residues include Cys112 and His243. An ACP-binding region spans residues 244 to 248; sequence QANLR. Asn273 is a catalytic residue.

It belongs to the thiolase-like superfamily. FabH family. Homodimer.

It is found in the cytoplasm. The enzyme catalyses malonyl-[ACP] + acetyl-CoA + H(+) = 3-oxobutanoyl-[ACP] + CO2 + CoA. Its pathway is lipid metabolism; fatty acid biosynthesis. Its function is as follows. Catalyzes the condensation reaction of fatty acid synthesis by the addition to an acyl acceptor of two carbons from malonyl-ACP. Catalyzes the first condensation reaction which initiates fatty acid synthesis and may therefore play a role in governing the total rate of fatty acid production. Possesses both acetoacetyl-ACP synthase and acetyl transacylase activities. Its substrate specificity determines the biosynthesis of branched-chain and/or straight-chain of fatty acids. This Histophilus somni (strain 2336) (Haemophilus somnus) protein is Beta-ketoacyl-[acyl-carrier-protein] synthase III.